A 118-amino-acid chain; its full sequence is Large ribosomal subunit protein bL20 (118 aa).

It belongs to the bacterial ribosomal protein bL20 family.

Its function is as follows. Binds directly to 23S ribosomal RNA and is necessary for the in vitro assembly process of the 50S ribosomal subunit. It is not involved in the protein synthesizing functions of that subunit. The polypeptide is Large ribosomal subunit protein bL20 (Pseudoalteromonas atlantica (strain T6c / ATCC BAA-1087)).